A 157-amino-acid polypeptide reads, in one-letter code: Endoribonuclease YbeY (157 aa).

Zn(2+)-binding residues include His114, His118, and His124.

This sequence belongs to the endoribonuclease YbeY family. Zn(2+) serves as cofactor.

Its subcellular location is the cytoplasm. Its function is as follows. Single strand-specific metallo-endoribonuclease involved in late-stage 70S ribosome quality control and in maturation of the 3' terminus of the 16S rRNA. The sequence is that of Endoribonuclease YbeY from Serratia proteamaculans (strain 568).